We begin with the raw amino-acid sequence, 223 residues long: Phosphoribosylformylglycinamidine synthase subunit PurQ (223 aa).

Residues 4–223 form the Glutamine amidotransferase type-1 domain; that stretch reads RIGVITFPGT…FQSVLSTLVS (220 aa). The active-site Nucleophile is Cys-87. Residues His-195 and Glu-197 contribute to the active site.

In terms of assembly, part of the FGAM synthase complex composed of 1 PurL, 1 PurQ and 2 PurS subunits.

It localises to the cytoplasm. The catalysed reaction is N(2)-formyl-N(1)-(5-phospho-beta-D-ribosyl)glycinamide + L-glutamine + ATP + H2O = 2-formamido-N(1)-(5-O-phospho-beta-D-ribosyl)acetamidine + L-glutamate + ADP + phosphate + H(+). It catalyses the reaction L-glutamine + H2O = L-glutamate + NH4(+). Its pathway is purine metabolism; IMP biosynthesis via de novo pathway; 5-amino-1-(5-phospho-D-ribosyl)imidazole from N(2)-formyl-N(1)-(5-phospho-D-ribosyl)glycinamide: step 1/2. Part of the phosphoribosylformylglycinamidine synthase complex involved in the purines biosynthetic pathway. Catalyzes the ATP-dependent conversion of formylglycinamide ribonucleotide (FGAR) and glutamine to yield formylglycinamidine ribonucleotide (FGAM) and glutamate. The FGAM synthase complex is composed of three subunits. PurQ produces an ammonia molecule by converting glutamine to glutamate. PurL transfers the ammonia molecule to FGAR to form FGAM in an ATP-dependent manner. PurS interacts with PurQ and PurL and is thought to assist in the transfer of the ammonia molecule from PurQ to PurL. This is Phosphoribosylformylglycinamidine synthase subunit PurQ from Corynebacterium jeikeium (strain K411).